Reading from the N-terminus, the 522-residue chain is Anti-sigma-I factor RsgI4 (522 aa).

Over 1–51 the chain is Cytoplasmic; sequence MNLGVVIKIKRKKAIIVTETGEFKAVNARNGMFLGQKILFDQQDVIENNRN. One can recognise a RsgI N-terminal anti-sigma domain in the interval 2-49; sequence NLGVVIKIKRKKAIIVTETGEFKAVNARNGMFLGQKILFDQQDVIENN. Residues 52 to 72 form a helical membrane-spanning segment; that stretch reads GIGLAYSAAIAGMVAVFVFMF. Residues 73-522 are Extracellular-facing; the sequence is TYFGLHNFNG…SGILKWGREP (450 aa). The span at 311–361 shows a compositional bias: low complexity; sequence SAKTPERATTVPVNTPVKPTDAPTKSPATATATATRAPVKATATPAKTLKP. The segment at 311-371 is disordered; that stretch reads SAKTPERATT…SDTPVKTPDG (61 aa). The CBM3 domain occupies 371 to 522; the sequence is GEQSVKVRFY…SGILKWGREP (152 aa).

Interacts (via RsgI N-terminal anti-sigma domain) with SigI4.

The protein localises to the cell membrane. In terms of biological role, anti-sigma factor for SigI4. Negatively regulates SigI4 activity through direct interaction. Binding of the polysaccharide substrate to the extracellular C-terminal sensing domain of RsgI4 may induce a conformational change in its N-terminal cytoplasmic region, leading to the release and activation of SigI4. The protein is Anti-sigma-I factor RsgI4 of Acetivibrio thermocellus (strain ATCC 27405 / DSM 1237 / JCM 9322 / NBRC 103400 / NCIMB 10682 / NRRL B-4536 / VPI 7372) (Clostridium thermocellum).